A 129-amino-acid chain; its full sequence is Cytochrome c oxidase subunit 5B, mitochondrial (129 aa).

The transit peptide at 1–31 directs the protein to the mitochondrion; it reads MASRLLRGVGALAAQALRAHGPRGVAATRSM. N6-acetyllysine occurs at positions 68 and 86. Zn(2+) is bound by residues cysteine 91, cysteine 93, cysteine 113, and cysteine 116. Lysine 121 bears the N6-acetyllysine mark.

Belongs to the cytochrome c oxidase subunit 5B family. As to quaternary structure, component of the cytochrome c oxidase (complex IV, CIV), a multisubunit enzyme composed of 14 subunits. The complex is composed of a catalytic core of 3 subunits MT-CO1, MT-CO2 and MT-CO3, encoded in the mitochondrial DNA, and 11 supernumerary subunits COX4I, COX5A, COX5B, COX6A, COX6B, COX6C, COX7A, COX7B, COX7C, COX8 and NDUFA4, which are encoded in the nuclear genome. The complex exists as a monomer or a dimer and forms supercomplexes (SCs) in the inner mitochondrial membrane with NADH-ubiquinone oxidoreductase (complex I, CI) and ubiquinol-cytochrome c oxidoreductase (cytochrome b-c1 complex, complex III, CIII), resulting in different assemblies (supercomplex SCI(1)III(2)IV(1) and megacomplex MCI(2)III(2)IV(2)).

The protein resides in the mitochondrion inner membrane. It participates in energy metabolism; oxidative phosphorylation. Functionally, component of the cytochrome c oxidase, the last enzyme in the mitochondrial electron transport chain which drives oxidative phosphorylation. The respiratory chain contains 3 multisubunit complexes succinate dehydrogenase (complex II, CII), ubiquinol-cytochrome c oxidoreductase (cytochrome b-c1 complex, complex III, CIII) and cytochrome c oxidase (complex IV, CIV), that cooperate to transfer electrons derived from NADH and succinate to molecular oxygen, creating an electrochemical gradient over the inner membrane that drives transmembrane transport and the ATP synthase. Cytochrome c oxidase is the component of the respiratory chain that catalyzes the reduction of oxygen to water. Electrons originating from reduced cytochrome c in the intermembrane space (IMS) are transferred via the dinuclear copper A center (CU(A)) of subunit 2 and heme A of subunit 1 to the active site in subunit 1, a binuclear center (BNC) formed by heme A3 and copper B (CU(B)). The BNC reduces molecular oxygen to 2 water molecules using 4 electrons from cytochrome c in the IMS and 4 protons from the mitochondrial matrix. The protein is Cytochrome c oxidase subunit 5B, mitochondrial (Cox5b) of Rattus norvegicus (Rat).